The chain runs to 449 residues: Putative BTB/POZ domain-containing protein L742 (449 aa).

A BTB domain is found at 79–148 (EDGYVYINIG…LTMSNQELSG (70 aa)).

It belongs to the mimivirus BTB/WD family.

The polypeptide is Putative BTB/POZ domain-containing protein L742 (Acanthamoeba polyphaga mimivirus (APMV)).